Here is a 240-residue protein sequence, read N- to C-terminus: 4-hydroxy-tetrahydrodipicolinate reductase (240 aa).

Residues Ala79–Thr81 and Ser103–Met106 each bind NAD(+). Residue His135 is the Proton donor/acceptor of the active site. Residue His136 coordinates (S)-2,3,4,5-tetrahydrodipicolinate. Lys139 functions as the Proton donor in the catalytic mechanism. Residue Gly145 to Thr146 participates in (S)-2,3,4,5-tetrahydrodipicolinate binding.

Belongs to the DapB family.

It localises to the cytoplasm. It carries out the reaction (S)-2,3,4,5-tetrahydrodipicolinate + NAD(+) + H2O = (2S,4S)-4-hydroxy-2,3,4,5-tetrahydrodipicolinate + NADH + H(+). It catalyses the reaction (S)-2,3,4,5-tetrahydrodipicolinate + NADP(+) + H2O = (2S,4S)-4-hydroxy-2,3,4,5-tetrahydrodipicolinate + NADPH + H(+). It functions in the pathway amino-acid biosynthesis; L-lysine biosynthesis via DAP pathway; (S)-tetrahydrodipicolinate from L-aspartate: step 4/4. Catalyzes the conversion of 4-hydroxy-tetrahydrodipicolinate (HTPA) to tetrahydrodipicolinate. The protein is 4-hydroxy-tetrahydrodipicolinate reductase of Staphylococcus aureus (strain JH1).